The chain runs to 368 residues: D-alanine--D-alanine ligase (368 aa).

The 210-residue stretch at 141–350 (KMIWDYSGLP…YNELIMHLIE (210 aa)) folds into the ATP-grasp domain. 176–231 (EKDLEYPLFIKPCRAGSSVGAGMVKNRNELLEQAEESFLWDNKILVEACIEAREVE) contacts ATP. Asp303, Glu317, and Asn319 together coordinate Mg(2+).

The protein belongs to the D-alanine--D-alanine ligase family. Mg(2+) serves as cofactor. Mn(2+) is required as a cofactor.

It localises to the cytoplasm. It catalyses the reaction 2 D-alanine + ATP = D-alanyl-D-alanine + ADP + phosphate + H(+). It participates in cell wall biogenesis; peptidoglycan biosynthesis. Functionally, cell wall formation. The protein is D-alanine--D-alanine ligase of Treponema denticola (strain ATCC 35405 / DSM 14222 / CIP 103919 / JCM 8153 / KCTC 15104).